The primary structure comprises 317 residues: DNA-directed RNA polymerase subunit alpha (317 aa).

Residues 1–229 form an alpha N-terminal domain (alpha-NTD) region; the sequence is MLNEFIYPDK…KHYELLENIF (229 aa). An alpha C-terminal domain (alpha-CTD) region spans residues 245–317; the sequence is AEKLSLSIEE…ELGMNIETQR (73 aa).

Belongs to the RNA polymerase alpha chain family. Homodimer. The RNAP catalytic core consists of 2 alpha, 1 beta, 1 beta' and 1 omega subunit. When a sigma factor is associated with the core the holoenzyme is formed, which can initiate transcription.

It catalyses the reaction RNA(n) + a ribonucleoside 5'-triphosphate = RNA(n+1) + diphosphate. DNA-dependent RNA polymerase catalyzes the transcription of DNA into RNA using the four ribonucleoside triphosphates as substrates. This chain is DNA-directed RNA polymerase subunit alpha, found in Aquifex aeolicus (strain VF5).